The sequence spans 130 residues: Small ribosomal subunit protein uS11 (130 aa).

The protein belongs to the universal ribosomal protein uS11 family. As to quaternary structure, part of the 30S ribosomal subunit. Interacts with proteins S7 and S18. Binds to IF-3.

In terms of biological role, located on the platform of the 30S subunit, it bridges several disparate RNA helices of the 16S rRNA. Forms part of the Shine-Dalgarno cleft in the 70S ribosome. The sequence is that of Small ribosomal subunit protein uS11 from Dehalococcoides mccartyi (strain ATCC BAA-2100 / JCM 16839 / KCTC 5957 / BAV1).